We begin with the raw amino-acid sequence, 791 residues long: Nuclear cap-binding protein subunit 1 (791 aa).

Residues 1–14 (MSRRRHSDENDGGP) are compositionally biased toward basic and acidic residues. The tract at residues 1–24 (MSRRRHSDENDGGPHHKRRKTSEP) is disordered. The MIF4G domain maps to 28–240 (EDRLESLICR…CLWAQIQKLK (213 aa)). Residues 641–714 (LHSTIRKMNK…SEQKNLFLVI (74 aa)) are a coiled coil. The tract at residues 668–687 (KQHKHRDSDDNDEDSGRKDG) is disordered.

This sequence belongs to the NCBP1 family. As to quaternary structure, component of the nuclear cap-binding complex (CBC), a heterodimer composed of ncbp1/cbp80 and ncbp2/cbp20 that interacts with m7GpppG-capped RNA. Component of an alternative nuclear cap-binding complex (CBC) composed of ncbp1/cbp80 and ncbp3.

It is found in the nucleus. It localises to the cytoplasm. In terms of biological role, component of the cap-binding complex (CBC), which binds cotranscriptionally to the 5'-cap of pre-mRNAs and is involved in various processes such as pre-mRNA splicing, translation regulation, nonsense-mediated mRNA decay, RNA-mediated gene silencing (RNAi) by microRNAs (miRNAs) and mRNA export. The CBC complex is involved in mRNA export from the nucleus, leading to the recruitment of the mRNA export machinery to the 5'-end of mRNA and to mRNA export in a 5' to 3' direction through the nuclear pore. The CBC complex is also involved in mediating U snRNA and intronless mRNAs export from the nucleus. The CBC complex is essential for a pioneer round of mRNA translation, before steady state translation when the CBC complex is replaced by cytoplasmic cap-binding protein eIF4E. The pioneer round of mRNA translation mediated by the CBC complex plays a central role in nonsense-mediated mRNA decay (NMD), NMD only taking place in mRNAs bound to the CBC complex, but not on eIF4E-bound mRNAs. The CBC complex enhances NMD in mRNAs containing at least one exon-junction complex (EJC), promoting the interaction between UPF1 and UPF2. The CBC complex is also involved in 'failsafe' NMD, which is independent of the EJC complex, while it does not participate in Staufen-mediated mRNA decay (SMD). During cell proliferation, the CBC complex is also involved in microRNAs (miRNAs) biogenesis via its interaction with SRRT/ARS2 and is required for miRNA-mediated RNA interference. The CBC complex also acts as a negative regulator of parn, thereby acting as an inhibitor of mRNA deadenylation. In the CBC complex, ncbp1/cbp80 does not bind directly capped RNAs (m7GpppG-capped RNA) but is required to stabilize the movement of the N-terminal loop of ncbp2/cbp20 and lock the CBC into a high affinity cap-binding state with the cap structure. Associates with NCBP3 to form an alternative cap-binding complex (CBC) which plays a key role in mRNA export. The conventional CBC with NCBP2 binds both small nuclear RNA (snRNA) and messenger (mRNA) and is involved in their export from the nucleus whereas the alternative CBC with NCBP3 does not bind snRNA and associates only with mRNA thereby playing a role only in mRNA export. In Xenopus tropicalis (Western clawed frog), this protein is Nuclear cap-binding protein subunit 1 (ncbp1).